A 164-amino-acid chain; its full sequence is Cyclic pyranopterin monophosphate synthase (164 aa).

Residues 75–77 (MCH) and 116–117 (ME) each bind substrate. Residue D131 is part of the active site.

It belongs to the MoaC family. Homohexamer; trimer of dimers.

It carries out the reaction (8S)-3',8-cyclo-7,8-dihydroguanosine 5'-triphosphate = cyclic pyranopterin phosphate + diphosphate. Its pathway is cofactor biosynthesis; molybdopterin biosynthesis. Functionally, catalyzes the conversion of (8S)-3',8-cyclo-7,8-dihydroguanosine 5'-triphosphate to cyclic pyranopterin monophosphate (cPMP). This chain is Cyclic pyranopterin monophosphate synthase, found in Staphylococcus aureus (strain USA300).